We begin with the raw amino-acid sequence, 415 residues long: Serine/threonine transporter SstT (415 aa).

Helical transmembrane passes span 23–43, 47–67, 85–105, 144–164, 181–201, 220–240, 293–313, and 333–353; these read ILIG…AAIA, LGTL…LMLV, ILFL…LFSF, ALLN…GFAL, AVTF…FGLV, LLVL…LLVF, IPLG…VLTL, and VVAS…LLLI.

Belongs to the dicarboxylate/amino acid:cation symporter (DAACS) (TC 2.A.23) family.

It localises to the cell inner membrane. It carries out the reaction L-serine(in) + Na(+)(in) = L-serine(out) + Na(+)(out). The catalysed reaction is L-threonine(in) + Na(+)(in) = L-threonine(out) + Na(+)(out). Functionally, involved in the import of serine and threonine into the cell, with the concomitant import of sodium (symport system). In Klebsiella pneumoniae (strain 342), this protein is Serine/threonine transporter SstT.